A 461-amino-acid chain; its full sequence is Peptidyl-prolyl cis-trans isomerase-like 4 (461 aa).

The 171-residue stretch at 1 to 171 (MSVLLETSLG…KDIRIRHTVI (171 aa)) folds into the PPIase cyclophilin-type domain. Residues 248–326 (NVLFVCKLNP…HRIHVDFSQS (79 aa)) form the RRM domain. Residues 372–461 (NYNMVFDKND…DDRYRDRRRR (90 aa)) form a disordered region. Basic and acidic residues-rich tracts occupy residues 378-392 (DKND…ERSY) and 400-461 (NYRD…RRRR).

This sequence belongs to the cyclophilin-type PPIase family. PPIL4 subfamily.

The protein resides in the nucleus. It catalyses the reaction [protein]-peptidylproline (omega=180) = [protein]-peptidylproline (omega=0). In terms of biological role, PPIases accelerate the folding of proteins. It catalyzes the cis-trans isomerization of proline imidic peptide bonds in oligopeptides. The sequence is that of Peptidyl-prolyl cis-trans isomerase-like 4 (cyp6) from Emericella nidulans (strain FGSC A4 / ATCC 38163 / CBS 112.46 / NRRL 194 / M139) (Aspergillus nidulans).